Reading from the N-terminus, the 342-residue chain is Transmembrane protein 268 (342 aa).

Transmembrane regions (helical) follow at residues alanine 106–phenylalanine 126 and alanine 133–phenylalanine 153. Residues valine 245–proline 267 form a disordered region.

Interacts with ITGAM; this interaction inhibits ITGAM degradation via the endosome-lysosome pathway. Interacts with ITGB4; this interaction prevents ITGB4 degradation.

The protein localises to the cell membrane. Functionally, stabilizes cell surface expression of ITGAM and participates in the adhesion and migration of phagocytes during bacterial clearance. The polypeptide is Transmembrane protein 268 (Mus musculus (Mouse)).